A 338-amino-acid polypeptide reads, in one-letter code: Holliday junction branch migration complex subunit RuvB (338 aa).

The large ATPase domain (RuvB-L) stretch occupies residues 1–184 (MTEEERLLSA…FGIISHMEYY (184 aa)). ATP is bound by residues Leu-23, Arg-24, Gly-65, Lys-68, Thr-69, Thr-70, 131–133 (EDF), Arg-174, Tyr-184, and Arg-221. Position 69 (Thr-69) interacts with Mg(2+). A small ATPAse domain (RuvB-S) region spans residues 185-255 (QEQDLKEIVL…IADKALTLLQ (71 aa)). A head domain (RuvB-H) region spans residues 258 to 338 (HQGLDYVDQK…GYDYLEGRKN (81 aa)). Residues Arg-313 and Arg-318 each coordinate DNA.

The protein belongs to the RuvB family. Homohexamer. Forms an RuvA(8)-RuvB(12)-Holliday junction (HJ) complex. HJ DNA is sandwiched between 2 RuvA tetramers; dsDNA enters through RuvA and exits via RuvB. An RuvB hexamer assembles on each DNA strand where it exits the tetramer. Each RuvB hexamer is contacted by two RuvA subunits (via domain III) on 2 adjacent RuvB subunits; this complex drives branch migration. In the full resolvosome a probable DNA-RuvA(4)-RuvB(12)-RuvC(2) complex forms which resolves the HJ.

It localises to the cytoplasm. It carries out the reaction ATP + H2O = ADP + phosphate + H(+). In terms of biological role, the RuvA-RuvB-RuvC complex processes Holliday junction (HJ) DNA during genetic recombination and DNA repair, while the RuvA-RuvB complex plays an important role in the rescue of blocked DNA replication forks via replication fork reversal (RFR). RuvA specifically binds to HJ cruciform DNA, conferring on it an open structure. The RuvB hexamer acts as an ATP-dependent pump, pulling dsDNA into and through the RuvAB complex. RuvB forms 2 homohexamers on either side of HJ DNA bound by 1 or 2 RuvA tetramers; 4 subunits per hexamer contact DNA at a time. Coordinated motions by a converter formed by DNA-disengaged RuvB subunits stimulates ATP hydrolysis and nucleotide exchange. Immobilization of the converter enables RuvB to convert the ATP-contained energy into a lever motion, pulling 2 nucleotides of DNA out of the RuvA tetramer per ATP hydrolyzed, thus driving DNA branch migration. The RuvB motors rotate together with the DNA substrate, which together with the progressing nucleotide cycle form the mechanistic basis for DNA recombination by continuous HJ branch migration. Branch migration allows RuvC to scan DNA until it finds its consensus sequence, where it cleaves and resolves cruciform DNA. The chain is Holliday junction branch migration complex subunit RuvB from Enterococcus faecalis (strain ATCC 700802 / V583).